A 335-amino-acid polypeptide reads, in one-letter code: NADH-quinone oxidoreductase subunit H (335 aa).

Transmembrane regions (helical) follow at residues 12-32 (IIAVVKAIVVLLAVVVCGALL), 81-101 (VIFTLAPVVAMSALLIAFAVI), 114-134 (IGLLFFFAMAGLSVYAVLFAG), 154-174 (VSYEVFMGLALMGIVVQVGSF), 187-207 (LWFIIPQFFGFCTFFIAGVAV), 238-258 (FFVGEYIGIILISALLVTLFF), 270-290 (SLAFFWFALKTAFFIMLFILL), and 307-327 (WKFCLPLTLINLLVTAAIVLL).

It belongs to the complex I subunit 1 family. NDH-1 is composed of 13 different subunits. Subunits NuoA, H, J, K, L, M, N constitute the membrane sector of the complex.

Its subcellular location is the cell inner membrane. The catalysed reaction is a quinone + NADH + 5 H(+)(in) = a quinol + NAD(+) + 4 H(+)(out). In terms of biological role, NDH-1 shuttles electrons from NADH, via FMN and iron-sulfur (Fe-S) centers, to quinones in the respiratory chain. The immediate electron acceptor for the enzyme in this species is believed to be ubiquinone. Couples the redox reaction to proton translocation (for every two electrons transferred, four hydrogen ions are translocated across the cytoplasmic membrane), and thus conserves the redox energy in a proton gradient. This subunit may bind ubiquinone. This Pseudomonas syringae pv. syringae (strain B728a) protein is NADH-quinone oxidoreductase subunit H.